Reading from the N-terminus, the 485-residue chain is Amyloid beta A4 precursor protein-binding family B member 1-interacting protein (485 aa).

Positions 84–107 are enriched in polar residues; that stretch reads QAQKTSGNQQSVVTQPSTGTNNDF. The interval 84 to 157 is disordered; sequence QAQKTSGNQQ…LSQEEQEARA (74 aa). Positions 125 to 147 are enriched in pro residues; sequence LPPPPPAPDLDLPPPPPPPPPEP. The 88-residue stretch at 175-262 folds into the Ras-associating domain; the sequence is KKLVVKVHMY…KVLFLEKKEK (88 aa). Residues 305 to 414 enclose the PH domain; it reads VPELEGALYL…WVTGIRIAKY (110 aa).

Belongs to the MRL family.

The protein localises to the cell membrane. Its subcellular location is the cytoplasm. The protein resides in the cytoskeleton. Its function is as follows. Appears to function in the signal transduction from Ras activation to actin cytoskeletal remodeling. This is Amyloid beta A4 precursor protein-binding family B member 1-interacting protein (APBB1IP) from Gallus gallus (Chicken).